Reading from the N-terminus, the 65-residue chain is uncharacterized protein (65 aa).

To E.coli YjiX.

This is an uncharacterized protein from Escherichia coli O6:H1 (strain CFT073 / ATCC 700928 / UPEC).